The primary structure comprises 220 residues: 7-cyano-7-deazaguanine synthase (220 aa).

Residue 7–17 (LSGGMDSSTLA) participates in ATP binding. Zn(2+) is bound by residues cysteine 187, cysteine 195, cysteine 198, and cysteine 201.

This sequence belongs to the QueC family. The cofactor is Zn(2+).

It carries out the reaction 7-carboxy-7-deazaguanine + NH4(+) + ATP = 7-cyano-7-deazaguanine + ADP + phosphate + H2O + H(+). Its pathway is purine metabolism; 7-cyano-7-deazaguanine biosynthesis. Its function is as follows. Catalyzes the ATP-dependent conversion of 7-carboxy-7-deazaguanine (CDG) to 7-cyano-7-deazaguanine (preQ(0)). The protein is 7-cyano-7-deazaguanine synthase of Methanospirillum hungatei JF-1 (strain ATCC 27890 / DSM 864 / NBRC 100397 / JF-1).